Reading from the N-terminus, the 467-residue chain is Nuclear distribution protein nudF (467 aa).

The region spanning 9 to 41 (QAEELHKSIIAYLASVNLTESSAALRAELGDSV) is the LisH domain. Positions 60-87 (TSVVRLQKKIMDLESRCAALQSELDSAT) form a coiled coil. WD repeat units lie at residues 113–154 (GHRN…RTVK), 156–196 (HTKA…KNIR), 200–247 (GHDH…CVKT), 250–289 (GHVDWVRAVAPSIDGRFLLAAGDDRIPRLWDLSSAETKST), 292–352 (GHEH…IKTL), 354–393 (GHDNWVRALAFHPGGKHLLSVADDKTIRCWDLTQECKCVR), 398–428 (AHGHFVTCLRWAPPLIKDGGANGEAETNGTP), and 429–466 (AATSTTNGVRPDPNVATKISIRCVIATGSVDQKVRIFA). Residues 417-439 (GANGEAETNGTPAATSTTNGVRP) form a disordered region. The segment covering 422 to 436 (AETNGTPAATSTTNG) has biased composition (polar residues).

This sequence belongs to the WD repeat LIS1/nudF family. In terms of assembly, self-associates. Interacts with nudE and dynein.

Its subcellular location is the cytoplasm. It is found in the cytoskeleton. It localises to the spindle pole. Its function is as follows. Positively regulates the activity of the minus-end directed microtubule motor protein dynein. May enhance dynein-mediated microtubule sliding by targeting dynein to the microtubule plus end. Required for nuclear migration during vegetative growth as well as development. Required for retrograde early endosome (EE) transport from the hyphal tip. Required for localization of dynein to the mitotic spindle poles. Recruits additional proteins to the dynein complex at SPBs. The polypeptide is Nuclear distribution protein nudF (Aspergillus fumigatus (strain CBS 144.89 / FGSC A1163 / CEA10) (Neosartorya fumigata)).